Here is a 1482-residue protein sequence, read N- to C-terminus: Chromosome partition protein MukB (1482 aa).

Gly-34–Ser-41 provides a ligand contact to ATP. Coiled-coil stretches lie at residues Leu-337 to Gln-418, Leu-444 to His-472, Arg-509 to Ala-601, Ala-781 to Ser-805, Glu-835 to Gly-1116, and Glu-1210 to Val-1265. Positions Pro-666 to Arg-783 are flexible hinge. A disordered region spans residues Ala-1049–Gln-1077. Residues Ala-1051–Thr-1066 show a composition bias toward basic and acidic residues.

The protein belongs to the SMC family. MukB subfamily. In terms of assembly, homodimerization via its hinge domain. Binds to DNA via its C-terminal region. Interacts, and probably forms a ternary complex, with MukE and MukF via its C-terminal region. The complex formation is stimulated by calcium or magnesium. Interacts with tubulin-related protein FtsZ.

It is found in the cytoplasm. The protein localises to the nucleoid. Its function is as follows. Plays a central role in chromosome condensation, segregation and cell cycle progression. Functions as a homodimer, which is essential for chromosome partition. Involved in negative DNA supercoiling in vivo, and by this means organize and compact chromosomes. May achieve or facilitate chromosome segregation by condensation DNA from both sides of a centrally located replisome during cell division. This is Chromosome partition protein MukB from Cronobacter sakazakii (strain ATCC BAA-894) (Enterobacter sakazakii).